The chain runs to 440 residues: UDP-N-acetylmuramoylalanine--D-glutamate ligase (440 aa).

Position 115 to 121 (115 to 121 (GSNGKST)) interacts with ATP.

The protein belongs to the MurCDEF family.

It is found in the cytoplasm. The catalysed reaction is UDP-N-acetyl-alpha-D-muramoyl-L-alanine + D-glutamate + ATP = UDP-N-acetyl-alpha-D-muramoyl-L-alanyl-D-glutamate + ADP + phosphate + H(+). The protein operates within cell wall biogenesis; peptidoglycan biosynthesis. Cell wall formation. Catalyzes the addition of glutamate to the nucleotide precursor UDP-N-acetylmuramoyl-L-alanine (UMA). In Aliivibrio fischeri (strain ATCC 700601 / ES114) (Vibrio fischeri), this protein is UDP-N-acetylmuramoylalanine--D-glutamate ligase.